Here is a 347-residue protein sequence, read N- to C-terminus: MLISQRPTLSEEVLTDSRSQFVIEPLEPGFGYTLGNSLRRTLLSSIPGAAVTSIRIDGVLHEFTTVPGVKEDVTDIILNLKALVVSSEEDEPVTMYLRKQGPGEVTAGDIVPPAGVTVHNPNMRIATLNDKGKLEVELVVERGRGYVPAVQNRASGAEIGRIPVDSIYSPVLKVTYKVDATRVEQRTDFDKLILDVETKNSITPRDALASAGKTLVELFGLARELNVEAEGIEIGPSPAEADHIASFALPIDDLDLTVRSYNCLKREGVHTVGELVSRTESDLLDIRNFGQKSIDEVKVKLHQLGLSLKDSPPSFDPSEVAGYDVATGTWSTEGAYDDQDYAETEQL.

The interval 1 to 226 (MLISQRPTLS…ELFGLARELN (226 aa)) is alpha N-terminal domain (alpha-NTD). The tract at residues 241 to 347 (ADHIASFALP…DQDYAETEQL (107 aa)) is alpha C-terminal domain (alpha-CTD).

This sequence belongs to the RNA polymerase alpha chain family. As to quaternary structure, homodimer. The RNAP catalytic core consists of 2 alpha, 1 beta, 1 beta' and 1 omega subunit. When a sigma factor is associated with the core the holoenzyme is formed, which can initiate transcription.

It catalyses the reaction RNA(n) + a ribonucleoside 5'-triphosphate = RNA(n+1) + diphosphate. DNA-dependent RNA polymerase catalyzes the transcription of DNA into RNA using the four ribonucleoside triphosphates as substrates. This Mycobacterium ulcerans (strain Agy99) protein is DNA-directed RNA polymerase subunit alpha.